A 513-amino-acid polypeptide reads, in one-letter code: Putative ATP-dependent RNA helicase QP509L (513 aa).

The 153-residue stretch at 110 to 262 folds into the Helicase ATP-binding domain; sequence KKLLSPYGRF…KIIIHHLGQP (153 aa). Position 123 to 130 (123 to 130) interacts with ATP; that stretch reads LNTGLGKT. The short motif at 215–218 is the DEAH box element; the sequence is DEAH.

This sequence belongs to the DEAD box helicase family. DEAH subfamily.

It carries out the reaction ATP + H2O = ADP + phosphate + H(+). In African swine fever virus (isolate Tick/South Africa/Pretoriuskop Pr4/1996) (ASFV), this protein is Putative ATP-dependent RNA helicase QP509L.